Reading from the N-terminus, the 379-residue chain is MKKHRVVVGLSGGVDSAVTAHLLKQQGHEVVGIFMKNWEDDDDSEFCSSRQDFLDAASVADVIGIEIEHVNFAAEYKDRVFAEFLREYQAGRTPNPDVLCNAEIKFKAFLDHAMRLGAEKIATGHYARVRQNPATGLFELLKGLDPSKDQSYFLHRLNQAQLSKTLFPVGELHKTEVRRIAADIGLPNAKKKDSTGICFIGERPFREFLNRYIQHAPGPILDDRGRKLGRHVGLSFYTLGQRQGLGIGGVKEKGAGAKAPSGQPVRGAGDHAPWFVARKELETNTLRVVQGHEHPWLLSHRLDAQDASWIAGHPPAAGACAAKTRYRQQDAACTVLAAQGDAFNLQFPEAQWAVTPGQSAVLYDGEVCLGGGVIAAVNG.

ATP contacts are provided by residues 9–16 (GLSGGVDS) and Met35. Residues 95 to 97 (NPD) are interaction with target base in tRNA. Cys100 (nucleophile) is an active-site residue. Cys100 and Cys198 are disulfide-bonded. Position 124 (Gly124) interacts with ATP. The segment at 148–150 (KDQ) is interaction with tRNA. Cys198 serves as the catalytic Cysteine persulfide intermediate. An interaction with tRNA region spans residues 325 to 326 (RY).

This sequence belongs to the MnmA/TRMU family.

The protein resides in the cytoplasm. The enzyme catalyses S-sulfanyl-L-cysteinyl-[protein] + uridine(34) in tRNA + AH2 + ATP = 2-thiouridine(34) in tRNA + L-cysteinyl-[protein] + A + AMP + diphosphate + H(+). In terms of biological role, catalyzes the 2-thiolation of uridine at the wobble position (U34) of tRNA, leading to the formation of s(2)U34. The chain is tRNA-specific 2-thiouridylase MnmA from Acidovorax sp. (strain JS42).